The following is an 85-amino-acid chain: Large ribosomal subunit protein bL27 (85 aa).

A compositionally biased stretch (gly residues) spans 1–10 (MAQKKGGGST). Residues 1–21 (MAQKKGGGSTRNGRDSQPKML) form a disordered region.

It belongs to the bacterial ribosomal protein bL27 family.

This is Large ribosomal subunit protein bL27 from Polaromonas naphthalenivorans (strain CJ2).